The sequence spans 484 residues: Protein nucleotidyltransferase YdiU (484 aa).

ATP-binding residues include glycine 81, glycine 83, arginine 84, lysine 103, aspartate 115, glycine 116, arginine 166, and arginine 173. The active-site Proton acceptor is the aspartate 244. Mg(2+)-binding residues include asparagine 245 and aspartate 254. Aspartate 254 contacts ATP.

This sequence belongs to the SELO family. It depends on Mg(2+) as a cofactor. Mn(2+) is required as a cofactor.

The enzyme catalyses L-seryl-[protein] + ATP = 3-O-(5'-adenylyl)-L-seryl-[protein] + diphosphate. The catalysed reaction is L-threonyl-[protein] + ATP = 3-O-(5'-adenylyl)-L-threonyl-[protein] + diphosphate. It carries out the reaction L-tyrosyl-[protein] + ATP = O-(5'-adenylyl)-L-tyrosyl-[protein] + diphosphate. It catalyses the reaction L-histidyl-[protein] + UTP = N(tele)-(5'-uridylyl)-L-histidyl-[protein] + diphosphate. The enzyme catalyses L-seryl-[protein] + UTP = O-(5'-uridylyl)-L-seryl-[protein] + diphosphate. The catalysed reaction is L-tyrosyl-[protein] + UTP = O-(5'-uridylyl)-L-tyrosyl-[protein] + diphosphate. In terms of biological role, nucleotidyltransferase involved in the post-translational modification of proteins. It can catalyze the addition of adenosine monophosphate (AMP) or uridine monophosphate (UMP) to a protein, resulting in modifications known as AMPylation and UMPylation. This Shewanella oneidensis (strain ATCC 700550 / JCM 31522 / CIP 106686 / LMG 19005 / NCIMB 14063 / MR-1) protein is Protein nucleotidyltransferase YdiU.